A 591-amino-acid chain; its full sequence is Acetyltransferase spyB (591 aa).

Asn-114 is a glycosylation site (N-linked (GlcNAc...) asparagine). The next 9 membrane-spanning stretches (helical) occupy residues 123–143, 168–188, 199–219, 228–248, 309–329, 383–403, 453–473, 481–501, and 529–549; these read GTIIWTLKYVPLAASRCLIFL, TLLYALPFLLAQNLVPAILIL, LWIFWSVFVFYQWLQIPISHG, VGVQLFIVILQGFNLVLINPL, SAFLVRQAAIVAWLYLYLNCA, ASILSVGVGLDAPEDWPPLFG, IFFVFLVSGVMHVMSDLLMGI, ILFFCSMAVGVMIEDAVQAAW, and LVGFIWVCVWLSLTTPAWLCP.

This sequence belongs to the wax synthase family.

Its subcellular location is the membrane. It carries out the reaction sartorypyrone F + acetyl-CoA = sartorypyrone G + CoA. The catalysed reaction is sartorypyrone D + acetyl-CoA = sartorypyrone A + CoA. It functions in the pathway secondary metabolite biosynthesis; terpenoid biosynthesis. Its function is as follows. Acetyltransferase; part of the gene cluster that mediates the biosynthesis of meroterpenoids called sartorypyrones. SpyB catalyzes the last step of the pathway and is responsible for the acetylation of sartorypyrones D and F to produce sartorypyrones A and G, respectively. The biosynthesis of sartorypyrones begins with the production of triacetic acid lactone (TAL) by the NR-PKS spyA using one molecule of acetyl-CoA and two molecules of malonyl-CoA. The prenyltransferase spyF then conjugates geranylgeranyl pyrophosphate (GGPP) to TAL to form geranylgeranyl-triacetate lactone, for which the pathway-specific geranylgeranyl pyrophosphate synthase (GGPS) spyE is required to provide GGPP. Subsequently, geranylgeranyl-triacetate lactone is epoxidized at the terminal olein by the FAD-dependent monooxygenase spyC, followed by cyclization of the terpenoid component catalyzed by the terpene cyclase spyD to produce both the bicyclic sartorypyrone F and the monocyclic sartorypyrone D. Finally, the last step of the biosynthesis involves the acetylation of the meroterpenoids sartorypyrones D and F by the acetyltransferase SpyB to produce sartorypyrones A and G, respectively. The polypeptide is Acetyltransferase spyB (Aspergillus fumigatus (strain ATCC MYA-4609 / CBS 101355 / FGSC A1100 / Af293) (Neosartorya fumigata)).